The primary structure comprises 64 residues: Conotoxin Pu3.4 (64 aa).

The N-terminal stretch at 1-16 (LGVLLPICLLLFPLTA) is a signal peptide. A propeptide spanning residues 17-49 (LPLDGDQPADRPAERMQDDFITEQHPLFDPVKR) is cleaved from the precursor. 3 disulfide bridges follow: Cys-50-Cys-63, Cys-51-Cys-59, and Cys-55-Cys-62. Pro-61 carries the post-translational modification 4-hydroxyproline.

The protein belongs to the conotoxin M superfamily. In terms of tissue distribution, expressed by the venom duct.

It localises to the secreted. The chain is Conotoxin Pu3.4 from Conus pulicarius (Flea-bitten cone).